A 332-amino-acid chain; its full sequence is Adenosine deaminase (332 aa).

Positions 12 and 14 each coordinate Zn(2+). Substrate is bound by residues His14, Asp16, and Gly170. His197 contributes to the Zn(2+) binding site. Glu200 functions as the Proton donor in the catalytic mechanism. Asp278 provides a ligand contact to Zn(2+). Asp279 lines the substrate pocket.

It belongs to the metallo-dependent hydrolases superfamily. Adenosine and AMP deaminases family. Adenosine deaminase subfamily. Zn(2+) is required as a cofactor.

It carries out the reaction adenosine + H2O + H(+) = inosine + NH4(+). The catalysed reaction is 2'-deoxyadenosine + H2O + H(+) = 2'-deoxyinosine + NH4(+). Catalyzes the hydrolytic deamination of adenosine and 2-deoxyadenosine. The sequence is that of Adenosine deaminase from Yersinia enterocolitica serotype O:8 / biotype 1B (strain NCTC 13174 / 8081).